Consider the following 376-residue polypeptide: T-box transcription factor 18 (376 aa).

Residues 38–63 (STSRPSSSSPPSLPAVSSELLSSSFP) are compositionally biased toward low complexity. A disordered region spans residues 38–76 (STSRPSSSSPPSLPAVSSELLSSSFPTNAPESSSRDLAP). The T-box DNA-binding region spans 171–364 (LANQEQWAKF…GNKYCRTDRK (194 aa)).

It is found in the nucleus. In terms of biological role, transcriptional regulator involved in developmental processes. Directly binds to the promoter region of the sex-determining factor xol-1 to activate its transcription. Its activation of xol-1 transcription controls sex determination and X chromosome dosage compensation to promote male development. Has a role in the fox-1-sex-1-mediated determination of sexual fate. The chain is T-box transcription factor 18 from Caenorhabditis elegans.